Here is a 336-residue protein sequence, read N- to C-terminus: MKYKDAGVNIDEGNKFVKMIKPFAEKTIKEGVLEGIGGFAALYEIKNYKNPVLVSSTDGVGTKLKIAFMMDKHDTVGIDLVAMCVNDVIVVGAKPLFFLDYFATGKLESEKAIQVIKGVAEGCEIAGCALIGGETAELPGFYKEGEYDLAGFCVGIVEKEEIIDTSSMAIGDVVIGLSSSGLHSNGYSLVRKVFFEKNNFSIEDYVPDIGKTLGEVLLTPTKIYVKSVEVLKGLKIKGMAHITGGGFIENIPRILRKGVSARIYKGSWEVPIIFDMIRRLGEIEEKEMYRTFNMGIGMVVIIDKEEVEKALKRLKEVGETAFVIGEIVEGEGGVIL.

It belongs to the AIR synthase family.

Its subcellular location is the cytoplasm. It carries out the reaction 2-formamido-N(1)-(5-O-phospho-beta-D-ribosyl)acetamidine + ATP = 5-amino-1-(5-phospho-beta-D-ribosyl)imidazole + ADP + phosphate + H(+). The protein operates within purine metabolism; IMP biosynthesis via de novo pathway; 5-amino-1-(5-phospho-D-ribosyl)imidazole from N(2)-formyl-N(1)-(5-phospho-D-ribosyl)glycinamide: step 2/2. The sequence is that of Phosphoribosylformylglycinamidine cyclo-ligase from Caldanaerobacter subterraneus subsp. tengcongensis (strain DSM 15242 / JCM 11007 / NBRC 100824 / MB4) (Thermoanaerobacter tengcongensis).